The chain runs to 251 residues: Adenosylcobinamide-GDP ribazoletransferase (251 aa).

7 helical membrane-spanning segments follow: residues 36–56 (LYPF…FVLS), 60–80 (VPIM…TGFL), 110–130 (VGAF…AGMF), 141–161 (VLIF…VSQE), 181–201 (EIIL…TLGI), 202–222 (NYLI…LKVK), and 231–251 (DVAG…LGII).

Belongs to the CobS family. It depends on Mg(2+) as a cofactor.

The protein localises to the cell membrane. It carries out the reaction alpha-ribazole + adenosylcob(III)inamide-GDP = adenosylcob(III)alamin + GMP + H(+). The enzyme catalyses alpha-ribazole 5'-phosphate + adenosylcob(III)inamide-GDP = adenosylcob(III)alamin 5'-phosphate + GMP + H(+). It participates in cofactor biosynthesis; adenosylcobalamin biosynthesis; adenosylcobalamin from cob(II)yrinate a,c-diamide: step 7/7. Joins adenosylcobinamide-GDP and alpha-ribazole to generate adenosylcobalamin (Ado-cobalamin). Also synthesizes adenosylcobalamin 5'-phosphate from adenosylcobinamide-GDP and alpha-ribazole 5'-phosphate. The chain is Adenosylcobinamide-GDP ribazoletransferase from Clostridium perfringens (strain 13 / Type A).